A 133-amino-acid polypeptide reads, in one-letter code: Protein archease (133 aa).

The Ca(2+) site is built by Asp11, Asp132, and Leu133.

It belongs to the archease family.

Functionally, activates the tRNA-splicing ligase complex by facilitating the enzymatic turnover of catalytic subunit RtcB. Acts by promoting the guanylylation of RtcB, a key intermediate step in tRNA ligation. Can also alter the NTP specificity of RtcB such that ATP, dGTP or ITP is used efficiently. In Thermoplasma volcanium (strain ATCC 51530 / DSM 4299 / JCM 9571 / NBRC 15438 / GSS1), this protein is Protein archease.